A 406-amino-acid polypeptide reads, in one-letter code: Acetylornithine/succinyldiaminopimelate aminotransferase (406 aa).

Residues 108–109 (GT) and Phe-141 each bind pyridoxal 5'-phosphate. Arg-144 contacts N(2)-acetyl-L-ornithine. Pyridoxal 5'-phosphate is bound at residue 226–229 (DEVQ). Lys-255 carries the N6-(pyridoxal phosphate)lysine modification. Ser-283 provides a ligand contact to N(2)-acetyl-L-ornithine. Residue Thr-284 participates in pyridoxal 5'-phosphate binding.

The protein belongs to the class-III pyridoxal-phosphate-dependent aminotransferase family. ArgD subfamily. Homodimer. Pyridoxal 5'-phosphate serves as cofactor.

Its subcellular location is the cytoplasm. The enzyme catalyses N(2)-acetyl-L-ornithine + 2-oxoglutarate = N-acetyl-L-glutamate 5-semialdehyde + L-glutamate. The catalysed reaction is N-succinyl-(2S,6S)-2,6-diaminopimelate + 2-oxoglutarate = (S)-2-succinylamino-6-oxoheptanedioate + L-glutamate. Its pathway is amino-acid biosynthesis; L-arginine biosynthesis; N(2)-acetyl-L-ornithine from L-glutamate: step 4/4. The protein operates within amino-acid biosynthesis; L-lysine biosynthesis via DAP pathway; LL-2,6-diaminopimelate from (S)-tetrahydrodipicolinate (succinylase route): step 2/3. In terms of biological role, involved in both the arginine and lysine biosynthetic pathways. The polypeptide is Acetylornithine/succinyldiaminopimelate aminotransferase (Escherichia coli (strain K12)).